A 2028-amino-acid polypeptide reads, in one-letter code: Phosphatidylinositol 4-kinase alpha 1 (2028 aa).

The tract at residues 184–241 (PASPKEQRQQNSANSETDTSSSQGSPISTNRYPSGKTEMASPGDEVASHGSNLSSKSS) is disordered. Positions 192 to 215 (QQNSANSETDTSSSQGSPISTNRY) are enriched in polar residues. Positions 231–241 (SHGSNLSSKSS) are enriched in low complexity. The region spanning 1483–1659 (TEYAKTAFSV…NAAFQEILPQ (177 aa)) is the PIK helical domain. Residues 1660 to 1773 (VRQHIIDGFS…VKPQACIFKV (114 aa)) form a pleckstrin homology (PH) domain conferring phosphoinositide binding specificity region. Residues 1734 to 2012 (VDSGIPLQSA…VCTDAYNKWT (279 aa)) enclose the PI3K/PI4K catalytic domain. A G-loop region spans residues 1740-1746 (LQSAAKV). The interval 1876 to 1884 (QPKDRHNGN) is catalytic loop. Positions 1895–1920 (HIDFGFILETSPGGNMRFESAHFKLS) are activation loop.

It belongs to the PI3/PI4-kinase family. Type III PI4K subfamily. Interacts in vitro with actin filaments via its PH domain. In terms of tissue distribution, present in leaves and inflorescences.

It localises to the membrane. The protein localises to the cytoplasm. It is found in the perinuclear region. It carries out the reaction a 1,2-diacyl-sn-glycero-3-phospho-(1D-myo-inositol) + ATP = a 1,2-diacyl-sn-glycero-3-phospho-(1D-myo-inositol 4-phosphate) + ADP + H(+). Repressed by PtdIns4P, adenosine and wortmannin, but stimulated by other negatively charged lipids such as PtdIns3P, PtdOH, and phosphatidyl-serine (PtdSer). Its function is as follows. Acts on phosphatidylinositol (PtdIns) in the first committed step in the production of the second messenger inositol-1,4,5,-trisphosphate. Can bind to phosphatidylinositol 4-monophosphate (PI-4-P or PtdIns4P), phosphatidylinositol 4,5-bisphosphate (PI-4,5-P2 or PtdIns4,5P2), and phosphatidic acid (PtdOH), but not to 3-phosphoinositides. May function upstream of the cold response phosphoinositide-dependent phospholipase C (PI-PLC) pathway. The chain is Phosphatidylinositol 4-kinase alpha 1 from Arabidopsis thaliana (Mouse-ear cress).